Here is a 610-residue protein sequence, read N- to C-terminus: Aspartate--tRNA(Asp/Asn) ligase (610 aa).

E196 lines the L-aspartate pocket. The tract at residues 220–223 (QIFK) is aspartate. R242 serves as a coordination point for L-aspartate. Residues 242–244 (RDE) and Q251 contribute to the ATP site. Residue H465 participates in L-aspartate binding. Residue E499 coordinates ATP. Position 506 (R506) interacts with L-aspartate. Residue 551 to 554 (GMDR) participates in ATP binding.

Belongs to the class-II aminoacyl-tRNA synthetase family. Type 1 subfamily. In terms of assembly, homodimer.

It is found in the cytoplasm. It catalyses the reaction tRNA(Asx) + L-aspartate + ATP = L-aspartyl-tRNA(Asx) + AMP + diphosphate. Its function is as follows. Aspartyl-tRNA synthetase with relaxed tRNA specificity since it is able to aspartylate not only its cognate tRNA(Asp) but also tRNA(Asn). Reaction proceeds in two steps: L-aspartate is first activated by ATP to form Asp-AMP and then transferred to the acceptor end of tRNA(Asp/Asn). The polypeptide is Aspartate--tRNA(Asp/Asn) ligase (Nitratidesulfovibrio vulgaris (strain ATCC 29579 / DSM 644 / CCUG 34227 / NCIMB 8303 / VKM B-1760 / Hildenborough) (Desulfovibrio vulgaris)).